The chain runs to 180 residues: Putative 5'(3')-deoxyribonucleotidase (180 aa).

The active-site Nucleophile is the Asp9. Positions 9, 11, and 135 each coordinate Mg(2+). Asp11 serves as the catalytic Proton donor.

Belongs to the 5'(3')-deoxyribonucleotidase family. Mg(2+) is required as a cofactor.

Dephosphorylates the 5' and 2'(3')-phosphates of deoxyribonucleotides. In Staphylococcus aureus (strain Mu50 / ATCC 700699), this protein is Putative 5'(3')-deoxyribonucleotidase.